We begin with the raw amino-acid sequence, 603 residues long: Baeyer-Villiger monooxygenase (603 aa).

Residues E94, 102-105 (TWYW), D114, Y120, and V164 each bind FAD. Position 112–114 (112–114 (HCD)) interacts with NADP(+). Residues 248 to 254 (TGATGVQ), 271 to 272 (RT), and 386 to 387 (KR) contribute to the NADP(+) site.

It belongs to the FAD-binding monooxygenase family. It depends on FAD as a cofactor.

In terms of biological role, catalyzes a Baeyer-Villiger oxidation reaction, i.e. the insertion of an oxygen atom into a carbon-carbon bond adjacent to a carbonyl, which converts ketones to esters or lactones using NADPH and/or NADH as an electron donor. Thus, can convert bicyclo[3.2.0]hept-2-en-6-one into the oxidative lactone products 2-oxabicyclo[3.3.0]oct-6-en-3-one and 3-oxabicyclo[3.3.0]oct-6-en-2-one. Is also able to catalyze the sulfoxidation of methyl phenyl sulfide (thioanisole). The sequence is that of Baeyer-Villiger monooxygenase from Streptomyces coelicolor (strain ATCC BAA-471 / A3(2) / M145).